The primary structure comprises 311 residues: 4-hydroxy-tetrahydrodipicolinate synthase (311 aa).

Threonine 49 is a binding site for pyruvate. The Proton donor/acceptor role is filled by tyrosine 138. Catalysis depends on lysine 166, which acts as the Schiff-base intermediate with substrate. Isoleucine 207 is a pyruvate binding site.

This sequence belongs to the DapA family. Homotetramer; dimer of dimers.

It localises to the cytoplasm. It catalyses the reaction L-aspartate 4-semialdehyde + pyruvate = (2S,4S)-4-hydroxy-2,3,4,5-tetrahydrodipicolinate + H2O + H(+). The protein operates within amino-acid biosynthesis; L-lysine biosynthesis via DAP pathway; (S)-tetrahydrodipicolinate from L-aspartate: step 3/4. Catalyzes the condensation of (S)-aspartate-beta-semialdehyde [(S)-ASA] and pyruvate to 4-hydroxy-tetrahydrodipicolinate (HTPA). The protein is 4-hydroxy-tetrahydrodipicolinate synthase of Limosilactobacillus fermentum (strain NBRC 3956 / LMG 18251) (Lactobacillus fermentum).